A 37-amino-acid chain; its full sequence is Cytochrome b6-f complex subunit 5 (37 aa).

Residues 5–25 (LLCGIVLGLIPVTLLGLFVAA) traverse the membrane as a helical segment.

The protein belongs to the PetG family. In terms of assembly, the 4 large subunits of the cytochrome b6-f complex are cytochrome b6, subunit IV (17 kDa polypeptide, PetD), cytochrome f and the Rieske protein, while the 4 small subunits are PetG, PetL, PetM and PetN. The complex functions as a dimer.

The protein localises to the cellular thylakoid membrane. Its function is as follows. Component of the cytochrome b6-f complex, which mediates electron transfer between photosystem II (PSII) and photosystem I (PSI), cyclic electron flow around PSI, and state transitions. PetG is required for either the stability or assembly of the cytochrome b6-f complex. The chain is Cytochrome b6-f complex subunit 5 from Synechococcus sp. (strain WH7803).